The primary structure comprises 188 residues: Crossover junction endodeoxyribonuclease RuvC (188 aa).

Active-site residues include Asp-7, Glu-68, and Asp-141. Mg(2+) contacts are provided by Asp-7, Glu-68, and Asp-141.

It belongs to the RuvC family. In terms of assembly, homodimer which binds Holliday junction (HJ) DNA. The HJ becomes 2-fold symmetrical on binding to RuvC with unstacked arms; it has a different conformation from HJ DNA in complex with RuvA. In the full resolvosome a probable DNA-RuvA(4)-RuvB(12)-RuvC(2) complex forms which resolves the HJ. The cofactor is Mg(2+).

It is found in the cytoplasm. It carries out the reaction Endonucleolytic cleavage at a junction such as a reciprocal single-stranded crossover between two homologous DNA duplexes (Holliday junction).. Functionally, the RuvA-RuvB-RuvC complex processes Holliday junction (HJ) DNA during genetic recombination and DNA repair. Endonuclease that resolves HJ intermediates. Cleaves cruciform DNA by making single-stranded nicks across the HJ at symmetrical positions within the homologous arms, yielding a 5'-phosphate and a 3'-hydroxyl group; requires a central core of homology in the junction. The consensus cleavage sequence is 5'-(A/T)TT(C/G)-3'. Cleavage occurs on the 3'-side of the TT dinucleotide at the point of strand exchange. HJ branch migration catalyzed by RuvA-RuvB allows RuvC to scan DNA until it finds its consensus sequence, where it cleaves and resolves the cruciform DNA. This is Crossover junction endodeoxyribonuclease RuvC from Streptomyces coelicolor (strain ATCC BAA-471 / A3(2) / M145).